Consider the following 247-residue polypeptide: 2,3-bisphosphoglycerate-dependent phosphoglycerate mutase (247 aa).

Residues 8-15, 21-22, Arg60, 87-90, Lys98, 114-115, and 183-184 contribute to the substrate site; these read RHGESQWN, TG, ERHY, RR, and GN. Residue His9 is the Tele-phosphohistidine intermediate of the active site. Glu87 serves as the catalytic Proton donor/acceptor.

This sequence belongs to the phosphoglycerate mutase family. BPG-dependent PGAM subfamily.

The catalysed reaction is (2R)-2-phosphoglycerate = (2R)-3-phosphoglycerate. It functions in the pathway carbohydrate degradation; glycolysis; pyruvate from D-glyceraldehyde 3-phosphate: step 3/5. In terms of biological role, catalyzes the interconversion of 2-phosphoglycerate and 3-phosphoglycerate. This chain is 2,3-bisphosphoglycerate-dependent phosphoglycerate mutase, found in Chlorobium chlorochromatii (strain CaD3).